The primary structure comprises 91 residues: Small ribosomal subunit protein uS19 (91 aa).

It belongs to the universal ribosomal protein uS19 family.

In terms of biological role, protein S19 forms a complex with S13 that binds strongly to the 16S ribosomal RNA. The protein is Small ribosomal subunit protein uS19 of Lactobacillus delbrueckii subsp. bulgaricus (strain ATCC 11842 / DSM 20081 / BCRC 10696 / JCM 1002 / NBRC 13953 / NCIMB 11778 / NCTC 12712 / WDCM 00102 / Lb 14).